Here is a 377-residue protein sequence, read N- to C-terminus: Oleosin-B4 (377 aa).

Residues 1–37 form a polar region; the sequence is MRNEIQNETAQTDQTQGSMFSFFNLFPFLLPMFEVIK. The next 3 helical transmembrane spans lie at 16-36, 38-58, and 69-89; these read QGSM…FEVI, MVVA…TLSG, and LFII…VLAA. Positions 38–133 are hydrophobic; the sequence is MVVASVASVV…IIPESIKPSN (96 aa). A run of 3 repeats spans residues 115-124, 125-134, and 135-144. A 3 X 10 AA tandem repeats of I-P-E-[SG]-I-K-P-S-N-[IV] region spans residues 115 to 144; that stretch reads IPESIKPSNIIPESIKPSNIIPEGIKPSNI. A disordered region spans residues 158 to 377; the sequence is KIKAKKEEKS…SSHGSGGKHI (220 aa). 2 stretches are compositionally biased toward basic and acidic residues: residues 162–185 and 195–231; these read KKEE…KGED and DEDK…EGKH. The 2-1 repeat unit spans residues 196–202; the sequence is EDKHGSG. The stretch at 196–202 is one 2.1 repeat; the sequence is EDKHGSG. Positions 196–222 are 3 X 6 AA tandem repeats of E-[SD]-[KT]-H-G-[KS]-G; sequence EDKHGSGAKHGKGESKHGKGESTHGKG. Residues 204–208 form a 2-2; truncated repeat; the sequence is KHGKG. 7 repeat units span residues 209–215, 216–222, 230–247, 260–277, 278–295, 296–313, and 355–359. The tract at residues 230-313 is 4 X 18 AA tandem repeats of K-H-E-S-G-G-[SA]-[PSA]-M-G-G-G-K-H-G-S-[GE]-G; the sequence is KHGSGGSSMG…MGGGKHGSGG (84 aa). The span at 232–244 shows a compositional bias: gly residues; it reads GSGGSSMGGGKHG. Residues 247–263 show a composition bias toward basic and acidic residues; the sequence is GKHETGGKHGSGGKHES. 2 stretches are compositionally biased toward gly residues: residues 280–292 and 302–314; these read GSGG…GKHG and SAMG…SGGK. Low complexity predominate over residues 350-369; it reads SSTSESSDGSSDGSSSDGSS. The tract at residues 355–368 is 3 X 5 AA tandem repeats of S-S-D-G-S; that stretch reads SSDGSSDGSSSDGS. The stretch at 360 to 363 is one 4-2; truncated repeat; that stretch reads SDGS. The 4-3 repeat unit spans residues 364–368; it reads SSDGS.

The protein belongs to the oleosin family. In terms of tissue distribution, the full-length protein is found in the tapetal lipid bodies of immature anthers, the proteolytically cleaved C-terminal product is found on the coats of pollen grains. No expression is detected in other flower organs, siliques or seedlings.

It is found in the lipid droplet. Its subcellular location is the membrane. Its function is as follows. Many of the major pollen coat proteins are derived from endoproteolytic cleavage of oleosin-like proteins. In Brassica napus (Rape), this protein is Oleosin-B4.